Consider the following 471-residue polypeptide: Pneumolysin (471 aa).

Transmembrane regions (beta stranded) follow at residues 158 to 171 (MEQL…DFEK), 178 to 187 (IDFNSVHSGE), 256 to 265 (SDEVEAAFEA), and 273 to 285 (APQT…LDNT). The Conserved undecapeptide motif lies at 427–437 (ECTGLAWEWWR). The short motif at 459 to 460 (TL) is the Cholesterol binding element.

This sequence belongs to the cholesterol-dependent cytolysin family. Elongated monomers align along their lengths, indicating intersubunit contacts and suggesting the prepore structure. Modeling based on cryo-EM shows a homooligomeric pore complex containing 38-44 subunits; when inserted in the host membrane. The size of isolated pores is detergent-dependent; in amphipol A8-35 homogenous rings form with 42 subunits.

Its subcellular location is the secreted. The protein localises to the host cell membrane. Erythrocytes hemolysis is inhibited by cholesterol. A cholesterol-dependent toxin that causes cytolysis by forming pores in cholesterol-containing host membranes. After binding to target membranes, the protein undergoes a major conformation change, leading to its insertion in the host membrane and formation of an oligomeric pore complex. Cholesterol is required for binding to host membranes, membrane insertion and pore formation; cholesterol binding is mediated by a Thr-Leu pair in the C-terminus. Can be reversibly inactivated by oxidation. The protein is Pneumolysin (ply) of Streptococcus pneumoniae serotype 2 (strain D39 / NCTC 7466).